The sequence spans 585 residues: MANLNFQQPPRSIANAALAGRTTGGFGGSSLAGHVTPTSGMFQTDFANSYPGTANYGQAPQQQQQQQQQPQLSPNRNAQLSVGGPAISSGNRNANLFGQRQFVERRAMQGLGSGPMSNMGNFMQTGRGGYGTGGGGGGPLNNFHVFGGGGGSDTSTPALLDPTEFPSLTNARGQNDQTLPQSNPLQPPGSKPYGNFFTSFGMVKQPTSEQSEFTMSNEDFPALPGTQNSDGTTNAVGSVAGTGGSGGASTENHLDGTEKPMNSIVVSGSASGSSGSNVGVVGGNGLGAVGSGIGGLAVGGGGGAGSSGGGGVGGNAASGVVGGSHVGLVGSNSGIGGVNSVPNSNAMMGVGGGLGSGSGSSGSGAGGEHLNDNSSNDKLVKSGVQTSPDGKVTNIPATMVNNQFGMVGLLTFIRAAETDPNLVTLSLGTDLTGLGLNLNSQESLHTTFAGPFVAQPCRAQDVEFNVPPEYLINFAIRDKLTAPVLKKLQEDLLFFLFYTNIGDMMQLMAAAELHSREWRYHVEEKIWITRIPGIDQYEKNGTKERGTFYYFDAQSWKRLSKVFQIDPEKLDKCPNISAFMNGQSV.

Positions 42–56 are enriched in polar residues; sequence FQTDFANSYPGTANY. 3 disordered regions span residues 42 to 93, 148 to 191, and 349 to 394; these read FQTD…GNRN, GGGG…PGSK, and GVGG…KVTN. Positions 58 to 71 are enriched in low complexity; sequence QAPQQQQQQQQQPQ. The span at 166-184 shows a compositional bias: polar residues; sequence PSLTNARGQNDQTLPQSNP. Positions 349-367 are enriched in gly residues; it reads GVGGGLGSGSGSSGSGAGG. The segment covering 372–388 has biased composition (polar residues); sequence DNSSNDKLVKSGVQTSP.

It belongs to the CNOT2/3/5 family. As to quaternary structure, component of the CCR4-NOT complex composed of at least Pop2/Caf1-55, Ccr4, Not1, Rga/Not2, and Not3. Expressed in heterogeneous levels between adjacent germline stem cells (at protein level).

It localises to the cytoplasm. In terms of biological role, component of the CCR4-NOT complex which is one of the major cellular mRNA deadenylases and is linked to various cellular processes including bulk mRNA degradation, miRNA-mediated repression, translational repression during translational initiation and general transcription regulation. Additional complex functions may be a consequence of its influence on mRNA expression. Essential for viability. Acts as a suppressor of position effect variegation (PEV) at the white locus and regulates the expression of several unrelated genes. Plays a role in germline stem cell differentiation in the ovaries. This is Regulator of gene activity from Drosophila melanogaster (Fruit fly).